The following is an 80-amino-acid chain: Caltrin (80 aa).

The signal sequence occupies residues 1–32 (MMAGRRSWPAMATVLLALLVCLGELVDSKPQP).

Its function is as follows. Inhibits calcium transport into spermatozoa; it does not bind directly to calcium. Binds to calmodulin. Inhibits the growth of microorganisms. Seem to act as an antibiotic by permeabilizing the bacterial membrane. In Bos taurus (Bovine), this protein is Caltrin (PYY2).